The chain runs to 334 residues: Iron-uptake system permease protein FeuB (334 aa).

The next 9 membrane-spanning stretches (helical) occupy residues Ile9–Gly29, Ala63–Ile83, Pro91–Leu111, Met119–Ala139, Leu150–Ile170, Pro191–Leu211, Val243–Val263, Pro281–Ile301, and Phe305–Ile325.

Belongs to the binding-protein-dependent transport system permease family. FecCD subfamily. The complex is composed of one ATP-binding protein (YusV), two transmembrane proteins (FeuB and FeuC) and a solute-binding protein (FeuA).

The protein localises to the cell membrane. Its subcellular location is the membrane raft. Involved in the uptake of iron. Probably responsible for the translocation of the substrate across the membrane. Functionally, part of the ABC transporter complex FeuABC/YusV involved in import of the catecholate siderophores bacillibactin and enterobactin. The sequence is that of Iron-uptake system permease protein FeuB (feuB) from Bacillus subtilis (strain 168).